Reading from the N-terminus, the 621-residue chain is Transmembrane protein 200C (621 aa).

A disordered region spans residues 12–37 (ARKQDPLRPPSQIPKRKRKAKKRRKN). Over residues 25–36 (PKRKRKAKKRRK) the composition is skewed to basic residues. A helical transmembrane segment spans residues 53-73 (GLIALCGILVLLVGIAMAVVG). The tract at residues 80-147 (GTNREGGKQL…RAASPSSSST (68 aa)) is disordered. Residues 125–147 (SSSAGAPRSTPPARAASPSSSST) are compositionally biased toward low complexity. The chain crosses the membrane as a helical span at residues 167–187 (VFGPLIMGIGIFLFICANAVL). Disordered stretches follow at residues 284 to 315 (WPPH…PREP), 347 to 368 (ASSC…QSTA), and 384 to 598 (LQGG…FTNK). Residues 290–303 (APSGGRPRGAASPP) are compositionally biased toward low complexity. Residues 405–418 (PGERGSQEIPRGEL) are compositionally biased toward basic and acidic residues. Residues 479–490 (RAPPSPEPPPSP) are compositionally biased toward pro residues. Low complexity-rich tracts occupy residues 491–505 (GSAD…KAAS) and 523–533 (GSSQSDDPSSS). Residues 586-595 (EQPQPVQRQF) are compositionally biased toward polar residues.

Belongs to the TMEM200 family.

It localises to the membrane. The polypeptide is Transmembrane protein 200C (TMEM200C) (Homo sapiens (Human)).